Reading from the N-terminus, the 155-residue chain is RNA pyrophosphohydrolase (155 aa).

One can recognise a Nudix hydrolase domain in the interval 5–149; it reads EYRSGVGIML…KKPLYEKILS (145 aa). The Nudix box signature appears at 39 to 60; it reads GGLEAKETPEVGVLRELEEETG.

Belongs to the Nudix hydrolase family. RppH subfamily. Requires a divalent metal cation as cofactor.

Accelerates the degradation of transcripts by removing pyrophosphate from the 5'-end of triphosphorylated RNA, leading to a more labile monophosphorylated state that can stimulate subsequent ribonuclease cleavage. In Zymomonas mobilis subsp. mobilis (strain ATCC 31821 / ZM4 / CP4), this protein is RNA pyrophosphohydrolase.